Here is a 155-residue protein sequence, read N- to C-terminus: SsrA-binding protein (155 aa).

Residues Thr-135–Lys-147 are compositionally biased toward basic and acidic residues. Positions Thr-135–Arg-155 are disordered.

The protein belongs to the SmpB family.

The protein localises to the cytoplasm. Required for rescue of stalled ribosomes mediated by trans-translation. Binds to transfer-messenger RNA (tmRNA), required for stable association of tmRNA with ribosomes. tmRNA and SmpB together mimic tRNA shape, replacing the anticodon stem-loop with SmpB. tmRNA is encoded by the ssrA gene; the 2 termini fold to resemble tRNA(Ala) and it encodes a 'tag peptide', a short internal open reading frame. During trans-translation Ala-aminoacylated tmRNA acts like a tRNA, entering the A-site of stalled ribosomes, displacing the stalled mRNA. The ribosome then switches to translate the ORF on the tmRNA; the nascent peptide is terminated with the 'tag peptide' encoded by the tmRNA and targeted for degradation. The ribosome is freed to recommence translation, which seems to be the essential function of trans-translation. This chain is SsrA-binding protein, found in Streptococcus pyogenes serotype M3 (strain SSI-1).